Consider the following 174-residue polypeptide: Large ribosomal subunit protein uL18 (174 aa).

It belongs to the universal ribosomal protein uL18 family. Part of the 50S ribosomal subunit. Contacts the 5S and 23S rRNAs.

Its function is as follows. This is one of the proteins that bind and probably mediate the attachment of the 5S RNA into the large ribosomal subunit, where it forms part of the central protuberance. In Methanosarcina mazei (strain ATCC BAA-159 / DSM 3647 / Goe1 / Go1 / JCM 11833 / OCM 88) (Methanosarcina frisia), this protein is Large ribosomal subunit protein uL18.